The primary structure comprises 257 residues: Protein LigF (257 aa).

A GST N-terminal domain is found at 1-82; sequence MTLKLYSFGP…YLEDVFPESG (82 aa). One can recognise a GST C-terminal domain in the interval 89 to 257; that stretch reads DPFKRAEMRV…LLKRQNEKVA (169 aa).

The protein belongs to the GST superfamily.

Its function is as follows. Lignin degradation enzyme. The protein is Protein LigF (ligF) of Sphingobium sp. (strain NBRC 103272 / SYK-6).